The following is a 601-amino-acid chain: DNA ligase (601 aa).

Position 258 (D258) interacts with ATP. The N6-AMP-lysine intermediate role is filled by K260. Residues R265, R280, E310, F350, R427, and K433 each contribute to the ATP site.

Belongs to the ATP-dependent DNA ligase family. The cofactor is Mg(2+). Ca(2+) serves as cofactor. Requires Mn(2+) as cofactor.

It carries out the reaction ATP + (deoxyribonucleotide)n-3'-hydroxyl + 5'-phospho-(deoxyribonucleotide)m = (deoxyribonucleotide)n+m + AMP + diphosphate.. DNA ligase that seals nicks in double-stranded DNA during DNA replication, DNA recombination and DNA repair. Also has low activity with dATP. Inactive with NAD(+), CTP, GTP, UTP, dCTP, dGTP or dTTP. This is DNA ligase from Saccharolobus shibatae (strain ATCC 51178 / DSM 5389 / JCM 8931 / NBRC 15437 / B12) (Sulfolobus shibatae).